We begin with the raw amino-acid sequence, 1191 residues long: MPVQAAQWTEFLSCPICYNEFDENVHKPISLGCSHTVCKTCLNKLHRKACPFDQTAINTDIDVLPVNFALLQLVGAQVPDHQSIKLSNLGENKHYEVAKKCVEDLALYLKPLSGGKGVASLNQSALSRPMQRKLVTLVNCQLVEEEGRVRAMRAARSLGERTVTELILQHQNPQQLSANLWAAVRARGCQFLGPAMQEEALKLVLLALEDGSALSRKVLVLFVVQRLEPRFPQASKTSIGHVVQLLYRASCFKVTKRDEDSSLMQLKEEFRSYEALRREHDAQIVHIAMEAGLRISPEQWSSLLYGDLAHKSHMQSIIDKLQSPESFAKSVQELTIVLQRTGDPANLNRLRPHLELLANIDPNPDAVSPTWEQLENAMVAVKTVVHGLVDFIQNYSRKGHETPQPQPNSKYKTSMCRDLRQQGGCPRGTNCTFAHSQEELEKYRLRNKKINATVRTFPLLNKVGVNNTVTTTAGNVISVIGSTETTGKIVPSTNGISNAENSVSQLISRSTDSTLRALETVKKVGKVGANGQNAAGPSADSVTENKIGSPPKTPVSNVAATSAGPSNVGTELNSVPQKSSPFLTRVPVYPPHSENIQYFQDPRTQIPFEVPQYPQTGYYPPPPTVPAGVAPCVPRFVRSNNVPESSLPPASMPYADHYSTFSPRDRMNSSPYQPPPPQPYGPVPPVPSGMYAPVYDSRRIWRPPMYQRDDIIRSNSLPPMDVMHSSVYQTSLRERYNSLDGYYSVACQPPSEPRTTVPLPREPCGHLKTSCEEQIRRKPDQWAQYHTQKAPLVSSTLPVATQSPTPPSPLFSVDFRADFSESVSGTKFEEDHLSHYSPWSCGTIGSCINAIDSEPKDVIANSNAVLMDLDSGDVKRRVHLFETQRRTKEEDPIIPFSDGPIISKWGAISRSSRTGYHTTDPVQATASQGSATKPISVSDYVPYVNAVDSRWSSYGNEATSSAHYVERDRFIVTDLSGHRKHSSTGDLLSLELQQAKSNSLLLQREANALAMQQKWNSLDEGRHLTLNLLSKEIELRNGELQSDYTEDATDTKPDRDIELELSALDTDEPDGQSEPIEEILDIQLGISSQNDQLLNGMAVENGHPVQQHQKEPPKQKKQSLGEDHVILEEQKTILPVTSCFSQPLPVSISNASCLPITTSVSAGNLILKTHVMSEDKNDFLKPVANGKMVNS.

Zn(2+)-binding residues include Cys14, Cys17, Cys33, His35, Cys38, Cys50, and Asp53. An RING-type; degenerate zinc finger spans residues 14-54 (CPICYNEFDENVHKPISLGCSHTVCKTCLNKLHRKACPFDQ). Residues 91 to 170 (ENKHYEVAKK…RTVTELILQH (80 aa)) form an HEPN-N region. The ROQ stretch occupies residues 171-325 (QNPQQLSANL…SIIDKLQSPE (155 aa)). The segment at 326–396 (SFAKSVQELT…GLVDFIQNYS (71 aa)) is HEPN-C. Residues 410-438 (KYKTSMCRDLRQQGGCPRGTNCTFAHSQE) form a C3H1-type zinc finger. Disordered regions lie at residues 528–576 (GANG…NSVP) and 644–680 (ESSL…PQPY). Over residues 530 to 546 (NGQNAAGPSADSVTENK) the composition is skewed to polar residues. A Phosphoserine modification is found at Ser549. Polar residues predominate over residues 554 to 576 (PVSNVAATSAGPSNVGTELNSVP). Phosphoserine is present on residues Ser808, Ser983, and Ser1119.

Interacts with EDC4. Interacts with CCR4-NOT deadenylase complex. Interacts with MAP3K5; the interaction is probably stimulus-dependent. Proteolytically cleaved after Arg-509 and Arg-585 by MALT1 in activated CD4(+) T cells; cleavage at Arg-509 and Arg-585 is critical for promoting RC3H1 degradation in response to T-cell receptor (TCR) stimulation, and hence is necessary for prolonging the stability of a set of mRNAs controlling Th17 cell differentiation. Expressed in spleen, testis, ovary and small intestine.

Its subcellular location is the cytoplasm. The protein localises to the P-body. The enzyme catalyses S-ubiquitinyl-[E2 ubiquitin-conjugating enzyme]-L-cysteine + [acceptor protein]-L-lysine = [E2 ubiquitin-conjugating enzyme]-L-cysteine + N(6)-ubiquitinyl-[acceptor protein]-L-lysine.. It functions in the pathway protein modification; protein ubiquitination. With respect to regulation, binding to dsRNA, but not CDE RNA, crosstalks with the E3 ubiquitin ligase activity and may inhibit ubiquitination. Functionally, post-transcriptional repressor of mRNAs containing a conserved stem loop motif, called constitutive decay element (CDE), which is often located in the 3'-UTR, as in HMGXB3, ICOS, IER3, NFKBID, NFKBIZ, PPP1R10, TNF and in many more mRNAs. Binds to CDE and promotes mRNA deadenylation and degradation. This process does not involve miRNAs. In follicular helper T (Tfh) cells, represses of ICOS and TNFRSF4 expression, thus preventing spontaneous Tfh cell differentiation, germinal center B-cell differentiation in the absence of immunization and autoimmunity. In resting or LPS-stimulated macrophages, controls inflammation by suppressing TNF expression. Also recognizes CDE in its own mRNA and in that of paralogous RC3H1, possibly leading to feedback loop regulation. miRNA-binding protein that regulates microRNA homeostasis. Enhances DICER-mediated processing of pre-MIR146a but reduces mature MIR146a levels through an increase of 3' end uridylation. Both inhibits ICOS mRNA expression and they may act together to exert the suppression. Acts as a ubiquitin E3 ligase. Pairs with E2 enzymes UBE2B, UBE2D2, UBE2E2, UBE2E3, UBE2G2, UBE2K and UBE2Q2 and produces polyubiquitin chains. Shows the strongest activity when paired with UBE2N:UBE2V1 or UBE2N:UBE2V2 E2 complexes and generate both short and long polyubiquitin chains. Involved in the ubiquitination of MAP3K5. Able to interact with double-stranded RNA (dsRNA). In Homo sapiens (Human), this protein is Roquin-2 (RC3H2).